The sequence spans 1494 residues: Serine/threonine-protein kinase VPS15 (1494 aa).

The N-myristoyl glycine moiety is linked to residue glycine 2. The 281-residue stretch at 27–307 (LVLKEVLGRG…VFPNYFSPFL (281 aa)) folds into the Protein kinase domain. Residues 33 to 41 (LGRGRFLKS) and lysine 54 each bind ATP. Residue aspartate 149 is the Proton acceptor of the active site. HEAT repeat units follow at residues 383 to 421 (NSKDEIFYSISDALKKNRHPFLKKITMDDLGTLMSLYDS), 480 to 517 (DRLQRVLPYVVALLSDPTAIVRCAAMETLCDILPLVRD), 524 to 562 (KIFPEYIFPMLSMLPEDTEESVRICYASNIAKLALTAYG), 610 to 646 (KTIAEVVQELVMGPKQTPNVRRALLQDIGELCFFFGQ), 648 to 685 (QSNDFLLPILPAFLNDRDEQLRSVFFEKIVYVCFFVGQ), 687 to 724 (SVEEYLLPYIDQALSDQTEAVIVNALECLSTLCKSSFL), and 727 to 764 (RALLQMIECVYPLLCYPSQWVRRAVVTFIAASSECLGA). Disordered stretches follow at residues 859 to 903 (QSVE…TVEL) and 1037 to 1064 (SASVTSEDASSPADLVGEPSLSRTSVPD). Residues 1037-1047 (SASVTSEDASS) show a composition bias toward low complexity. 7 WD repeats span residues 1079-1118 (EHRSAVNDIATSSDHSFFVSASDDSTVKVWDSRKLEKDIS), 1127-1166 (LEGSRGMCTTMLRNSTQVVVGASDGVIHMFSIDHISRGLG), 1184-1226 (KEGA…DAWT), 1231-1270 (PEEGYVSSLVTSPCGNWFVSGSSRGVLTLWDLRFRVPVNS), 1276-1323 (ICPI…CHQV), 1371-1409 (PRLPGIRSLLPLPGGDLLTGGTDLKIRRWDYSSPERSYC), and 1466-1494 (DSVQSLASVKLNQRLLISSSRDGAIKVWK).

It belongs to the protein kinase superfamily. Ser/Thr protein kinase family. Interacts with VPS34. Component of a complex made of VPS38/USL1 and PI3K main subunits such as VPS15, ATG6/VPS30 and VPS34. In terms of processing, autophosphorylated. In terms of tissue distribution, mainly expressed in anthers, pollen grains and pollen tubes, and, to a lower extent, in other tissues and organs including seedlings, roots, stems, leaves, flowers, pitils and siliques.

Its subcellular location is the cytoplasm. It localises to the golgi apparatus. The protein localises to the trans-Golgi network membrane. The protein resides in the endosome membrane. The enzyme catalyses L-seryl-[protein] + ATP = O-phospho-L-seryl-[protein] + ADP + H(+). It carries out the reaction L-threonyl-[protein] + ATP = O-phospho-L-threonyl-[protein] + ADP + H(+). Functionally, serine/threonine-protein kinase required for cytoplasm to vacuole transport (Cvt) and autophagy as a part of the autophagy-specific VPS34 PI3-kinase complex I. Required for pollen development and germination, probably via the modulation of phosphatidylinositol 3-phosphate (PI3P) formation and vacuolar organization. This chain is Serine/threonine-protein kinase VPS15, found in Arabidopsis thaliana (Mouse-ear cress).